Consider the following 259-residue polypeptide: Pimeloyl-[acyl-carrier protein] methyl ester esterase (259 aa).

Substrate is bound by residues tryptophan 18, 78 to 79 (SL), and 139 to 143 (FLALD). Serine 78 serves as the catalytic Nucleophile. Active-site residues include aspartate 203 and histidine 231. Residue histidine 231 participates in substrate binding.

Belongs to the AB hydrolase superfamily. Carboxylesterase BioH family. As to quaternary structure, monomer.

It localises to the cytoplasm. It carries out the reaction 6-carboxyhexanoyl-[ACP] methyl ester + H2O = 6-carboxyhexanoyl-[ACP] + methanol + H(+). It participates in cofactor biosynthesis; biotin biosynthesis. The physiological role of BioH is to remove the methyl group introduced by BioC when the pimeloyl moiety is complete. It allows to synthesize pimeloyl-ACP via the fatty acid synthetic pathway through the hydrolysis of the ester bonds of pimeloyl-ACP esters. This chain is Pimeloyl-[acyl-carrier protein] methyl ester esterase, found in Stenotrophomonas maltophilia (strain R551-3).